Reading from the N-terminus, the 245-residue chain is Probable transcriptional regulatory protein TP_0474 (245 aa).

This sequence belongs to the TACO1 family.

It is found in the cytoplasm. In Treponema pallidum (strain Nichols), this protein is Probable transcriptional regulatory protein TP_0474.